The primary structure comprises 181 residues: MAILLHFGVLITAFLSSHVEGKRDPILYCGACRALVDELLYEIRKVNPKKTVDVGSFRISPDGKQEQNKVPFAKSELYLTDVLEEICEKMNDYGLYVDPTTQEKSYKRFAPRDNEGIGSVDFKNFQFNPEESNSLKYACERVVEEHEDEVLSVITKENDNLADKLCTEETGLCKEYLHNEL.

The first 21 residues, 1-21, serve as a signal peptide directing secretion; it reads MAILLHFGVLITAFLSSHVEG. The Saposin B-type domain occupies 25–177; the sequence is PILYCGACRA…EETGLCKEYL (153 aa). Intrachain disulfides connect C29-C173, C32-C166, and C87-C139. Positions 178-181 match the Prevents secretion from ER motif; the sequence is HNEL.

It belongs to the canopy family.

It localises to the endoplasmic reticulum. Plays an role in early embryonic development. The sequence is that of Protein canopy homolog 1 (cnpy1) from Xenopus laevis (African clawed frog).